Here is a 113-residue protein sequence, read N- to C-terminus: Endoribonuclease SymE (113 aa).

The SpoVT-AbrB domain maps to 29–74 (SRYPDYSRIPAITLKGQWLEAAGFATGTAVDVKVMEGCIVLTAQPP).

The protein belongs to the SymE family.

The protein localises to the cytoplasm. Functionally, involved in the degradation and recycling of damaged RNA. It is itself a target for degradation by the ATP-dependent protease Lon. This chain is Endoribonuclease SymE, found in Escherichia coli (strain K12 / MC4100 / BW2952).